The sequence spans 115 residues: Large ribosomal subunit protein uL22 (115 aa).

Belongs to the universal ribosomal protein uL22 family. As to quaternary structure, part of the 50S ribosomal subunit.

This protein binds specifically to 23S rRNA; its binding is stimulated by other ribosomal proteins, e.g. L4, L17, and L20. It is important during the early stages of 50S assembly. It makes multiple contacts with different domains of the 23S rRNA in the assembled 50S subunit and ribosome. In terms of biological role, the globular domain of the protein is located near the polypeptide exit tunnel on the outside of the subunit, while an extended beta-hairpin is found that lines the wall of the exit tunnel in the center of the 70S ribosome. This chain is Large ribosomal subunit protein uL22, found in Thioalkalivibrio sulfidiphilus (strain HL-EbGR7).